The primary structure comprises 780 residues: uncharacterized protein (780 aa).

Positions Asn-10–Tyr-80 constitute a BTB domain.

This is an uncharacterized protein from Dictyostelium discoideum (Social amoeba).